A 172-amino-acid polypeptide reads, in one-letter code: UPF0398 protein gbs0290 (172 aa).

It belongs to the UPF0398 family.

This is UPF0398 protein gbs0290 from Streptococcus agalactiae serotype III (strain NEM316).